The sequence spans 155 residues: MADQNERAFQKQFGVNLNRKVKPGITKKKLLRRSRDVGLGFKTPREAIDGTYIDKKCPWTGDVRIRGRILTGVVRKAKMQRTIVIRRDYLHFVRKYSRFEKRHRNMSVHCSPVFRDVEHGDIVTIGECRPLSKTVRFNVLKVSKGQGAKKSFKKY.

A2 carries the N-acetylalanine modification.

It belongs to the universal ribosomal protein uS17 family.

The chain is Small ribosomal subunit protein uS17 from Drosophila yakuba (Fruit fly).